Consider the following 408-residue polypeptide: MINLKSLEKIKKCVVPLKSRSLIKVVGPDALKHLQGLTTNNLNRLKDNQSTNTSIYNGFLQGNGRLLFDSIISLDREHHNGNPKPISMAPGSSDNSGLDSFIVDIDSSILEEAMAHLKQYKLRNKIDIIDVTENFNVYSILDKTYKTVRDDSLFAQLEKDQCSVMMDPRHQIMGVRLLVPNNKQLVVEERLSKYESKDETIYNLFRLSQGIPQGVKEYQWGNIIPLEYNFDLLNGVDFHKGCYLGQELTSRTHFTGLIRKRIFPVVMSVKDVESASVMDEAIIDPTKPPKESLLFPKRILNALNLEHPPSDSALIVKNISPKHNQQQSSDEPVKVGTDSEIKTVSRSTDKFITGIHGVGLAMLKVENIDIFQLDNTVVHDKSNKELTVLPPCWISKLTSLQMTPQQVS.

A mitochondrion-targeting transit peptide spans M1–L74.

This sequence belongs to the GcvT family. CAF17/IBA57 subfamily.

It localises to the mitochondrion matrix. This chain is Iron-sulfur cluster assembly factor IBA57 homolog, mitochondrial (caf17), found in Dictyostelium discoideum (Social amoeba).